The sequence spans 564 residues: Large neutral amino acids transporter small subunit 3 (564 aa).

The chain crosses the membrane as a helical span at residues 20–40 (VVENLFFSAVLLGWASLLIML). Residues Asn54 and Asn57 are each glycosylated (N-linked (GlcNAc...) asparagine). 5 helical membrane-spanning segments follow: residues 78–98 (LGFTIGSFLLSATTLPLGILM), 105–124 (PLRLVGSACFAASCTLMALA), 131–151 (LSPLIFLALSLNGFAGICLTF), 165–185 (STFMALMIGSYASSAITFPGI), and 191–211 (AGVPFTVIMFTWSGLACLIFL). Phosphoserine occurs at positions 262 and 267. Transmembrane regions (helical) follow at residues 303-323 (IFLWSLVTMGMTQLRVIFYMG) and 357-377 (SIFGVMQLLCLLTCPLIGYIM). Asn396 carries N-linked (GlcNAc...) asparagine glycosylation. At Ser398 the chain carries Phosphoserine. The next 4 membrane-spanning stretches (helical) occupy residues 424 to 444 (AINAFTLTNILLVGFGIACLI), 451 to 471 (LLAFVLHTIVRGFFHSACGGL), 490 to 510 (LISAVFALLQQLLFMAMVGPL), and 515 to 535 (FWVNLGLLLLSFLGFLLPSYL). The N-linked (GlcNAc...) asparagine glycan is linked to Asn558.

The protein belongs to the SLC43A transporter (TC 2.A.1.44) family. In terms of tissue distribution, expressed in the kidney cortex as well as liver, pancreas, and skeletal muscle. In kidney expressed in the glomerular tuft (at protein level). Expressed in liver, skeletal muscle and pancreas (at protein level).

The protein resides in the cell membrane. It localises to the apical cell membrane. The protein localises to the endoplasmic reticulum membrane. The catalysed reaction is D-leucine(in) = D-leucine(out). The enzyme catalyses L-leucine(in) = L-leucine(out). It catalyses the reaction L-isoleucine(in) = L-isoleucine(out). It carries out the reaction L-methionine(in) = L-methionine(out). The catalysed reaction is L-phenylalanine(in) = L-phenylalanine(out). The enzyme catalyses L-valine(in) = L-valine(out). Its function is as follows. Uniport that mediates the transport of neutral amino acids such as L-leucine, L-isoleucine, L-valine, and L-phenylalanine. The transport activity is sodium ions-independent, electroneutral and mediated by a facilitated diffusion. The protein is Large neutral amino acids transporter small subunit 3 of Mus musculus (Mouse).